A 462-amino-acid polypeptide reads, in one-letter code: Serine--tRNA ligase, cytoplasmic (462 aa).

Position 246 to 248 (246 to 248 (TSE)) interacts with L-serine. ATP is bound by residues 279–281 (RRE) and Val295. Residue Glu302 coordinates L-serine. 366 to 369 (ELVS) lines the ATP pocket. Residue Thr404 coordinates L-serine.

Belongs to the class-II aminoacyl-tRNA synthetase family. Type-1 seryl-tRNA synthetase subfamily. Homodimer. The tRNA molecule binds across the dimer.

It localises to the cytoplasm. The protein resides in the cytosol. It carries out the reaction tRNA(Ser) + L-serine + ATP = L-seryl-tRNA(Ser) + AMP + diphosphate + H(+). In terms of biological role, catalyzes the attachment of serine to tRNA(Ser) in a two-step reaction: serine is first activated by ATP to form Ser-AMP and then transferred to the acceptor end of tRNA(Ser). This is Serine--tRNA ligase, cytoplasmic (SES1) from Candida albicans (strain SC5314 / ATCC MYA-2876) (Yeast).